Reading from the N-terminus, the 212-residue chain is Pyridoxine/pyridoxamine 5'-phosphate oxidase (212 aa).

Residues 7–10 and Lys66 contribute to the substrate site; that span reads RREY. FMN contacts are provided by residues 61-66, 76-77, Lys83, and Gln105; these read RIVLLK and YT. Tyr123, Arg127, and Ser131 together coordinate substrate. FMN contacts are provided by residues 140-141 and Trp185; that span reads QS. Residue 191–193 participates in substrate binding; it reads RLH. Residue Arg195 coordinates FMN.

It belongs to the pyridoxamine 5'-phosphate oxidase family. In terms of assembly, homodimer. FMN is required as a cofactor.

The enzyme catalyses pyridoxamine 5'-phosphate + O2 + H2O = pyridoxal 5'-phosphate + H2O2 + NH4(+). The catalysed reaction is pyridoxine 5'-phosphate + O2 = pyridoxal 5'-phosphate + H2O2. It functions in the pathway cofactor metabolism; pyridoxal 5'-phosphate salvage; pyridoxal 5'-phosphate from pyridoxamine 5'-phosphate: step 1/1. It participates in cofactor metabolism; pyridoxal 5'-phosphate salvage; pyridoxal 5'-phosphate from pyridoxine 5'-phosphate: step 1/1. Catalyzes the oxidation of either pyridoxine 5'-phosphate (PNP) or pyridoxamine 5'-phosphate (PMP) into pyridoxal 5'-phosphate (PLP). The sequence is that of Pyridoxine/pyridoxamine 5'-phosphate oxidase from Idiomarina loihiensis (strain ATCC BAA-735 / DSM 15497 / L2-TR).